Here is a 692-residue protein sequence, read N- to C-terminus: Elongation factor G (692 aa).

A tr-type G domain is found at proline 8–valine 282. GTP-binding positions include alanine 17–threonine 24, aspartate 81–histidine 85, and asparagine 135–aspartate 138.

The protein belongs to the TRAFAC class translation factor GTPase superfamily. Classic translation factor GTPase family. EF-G/EF-2 subfamily.

It is found in the cytoplasm. Its function is as follows. Catalyzes the GTP-dependent ribosomal translocation step during translation elongation. During this step, the ribosome changes from the pre-translocational (PRE) to the post-translocational (POST) state as the newly formed A-site-bound peptidyl-tRNA and P-site-bound deacylated tRNA move to the P and E sites, respectively. Catalyzes the coordinated movement of the two tRNA molecules, the mRNA and conformational changes in the ribosome. In Brevibacillus brevis (strain 47 / JCM 6285 / NBRC 100599), this protein is Elongation factor G.